A 314-amino-acid chain; its full sequence is Methionyl-tRNA formyltransferase (314 aa).

110–113 (SLLP) is a (6S)-5,6,7,8-tetrahydrofolate binding site.

This sequence belongs to the Fmt family.

The enzyme catalyses L-methionyl-tRNA(fMet) + (6R)-10-formyltetrahydrofolate = N-formyl-L-methionyl-tRNA(fMet) + (6S)-5,6,7,8-tetrahydrofolate + H(+). In terms of biological role, attaches a formyl group to the free amino group of methionyl-tRNA(fMet). The formyl group appears to play a dual role in the initiator identity of N-formylmethionyl-tRNA by promoting its recognition by IF2 and preventing the misappropriation of this tRNA by the elongation apparatus. In Levilactobacillus brevis (strain ATCC 367 / BCRC 12310 / CIP 105137 / JCM 1170 / LMG 11437 / NCIMB 947 / NCTC 947) (Lactobacillus brevis), this protein is Methionyl-tRNA formyltransferase.